The primary structure comprises 281 residues: TIP41-like protein (281 aa).

Belongs to the TIP41 family.

The polypeptide is TIP41-like protein (Caenorhabditis elegans).